A 35-amino-acid chain; its full sequence is MKKTFLPIFLVILLASYALANPQVTFSRDWGPGKK.

An N-terminal signal peptide occupies residues 1-22; that stretch reads MKKTFLPIFLVILLASYALANP. Residue glutamine 23 is modified to Pyrrolidone carboxylic acid. At proline 32 the chain carries Proline amide.

It belongs to the limacoditoxin-1 (ACP-like) family. Expressed by the venom secretory cell of the spine. The spine is a cuticular structure containing a single large nucleated venom-secreting cell at its base. It is an independent unit capable of producing, storing and injecting venom. On the back of D.vulnerans caterpillars, spines are grouped together by 50 to 100 to form scoli, of which there are eight in D.vulnerans.

The protein localises to the secreted. Functionally, potently activates insect G protein-coupled receptor. It activates the ACP receptor (ACPR) from the mosquito A.aegypti (EC(50)=0.55 nM) with a potency comparable to that of the endogenous ligand. Has no activity on receptors of the closely related neuropeptides adipokinetic hormone and corazonin. In vivo, does not reveal any observable effects when injected into crickets (A.domesticus). Does not induce increase in intracellular calcium in mouse DRG neurons, suggesting that it does not induce pain. This chain is Z-limacoditoxin(1)-Dv1, found in Doratifera vulnerans (Mottled cup moth).